The primary structure comprises 236 residues: MILLVSPKDVAEAYEAIEGGADIIDVKNPPEGSLGANFPWVIKETREATPEGMLVSAAIGDVPYKPGTVTLAALGATVSGADYIKVGLYGTRSYQEALDVMKNVTKAVKAVGENKIVVAAGYADAYRVGGVDPLVIPRVARDAGCDVAMLDTAVKDGKTLFDHMSIELLKEFVEETHKYGMKCALAGSIKIEEIPMLKEINCDIVGVRGAACTKGDRNEGRIQKDLVKEIVKVCKE.

Lys27 serves as the catalytic Schiff-base intermediate with substrate. Catalysis depends on Lys85, which acts as the Proton acceptor.

Belongs to the MfnB family.

The catalysed reaction is 2 D-glyceraldehyde 3-phosphate = 4-(hydroxymethyl)-2-furancarboxaldehyde phosphate + phosphate + 2 H2O. It participates in cofactor biosynthesis; methanofuran biosynthesis. Functionally, catalyzes the formation of 4-(hydroxymethyl)-2-furancarboxaldehyde phosphate (4-HFC-P) from two molecules of glyceraldehyde-3-P (GA-3-P). This Methanococcus maripaludis (strain C6 / ATCC BAA-1332) protein is (5-formylfuran-3-yl)methyl phosphate synthase.